We begin with the raw amino-acid sequence, 913 residues long: Cadherin-4 (913 aa).

Residues 1–20 (MTTGSVLPLLLLGLSGALRA) form the signal peptide. The propeptide occupies 21-166 (HREDLTVREA…SSGGLRRQKR (146 aa)). The N-linked (GlcNAc...) asparagine glycan is linked to asparagine 146. 5 consecutive Cadherin domains span residues 167–274 (DWVI…RPEF), 275–389 (INQV…PPEF), 390–504 (TTST…APYF), 505–610 (PSNH…DNAP), and 611–721 (QLLP…TVGA). At 167–731 (DWVIPPINVP…VAAAGLGTGA (565 aa)) the chain is on the extracellular side. N-linked (GlcNAc...) asparagine glycans are attached at residues asparagine 280, asparagine 409, asparagine 554, asparagine 629, asparagine 658, and asparagine 699. Residues 732–753 (IVAILICIVILLIMVLLFVVWM) traverse the membrane as a helical segment. The Cytoplasmic segment spans residues 754-913 (KRREKERHTK…ADMYGGGEED (160 aa)).

Distributed widely in mouse tissues with high levels present in brain, skeletal muscle and thymus.

The protein localises to the cell membrane. Functionally, cadherins are calcium-dependent cell adhesion proteins. They preferentially interact with themselves in a homophilic manner in connecting cells; cadherins may thus contribute to the sorting of heterogeneous cell types. May play an important role in retinal development. The sequence is that of Cadherin-4 (Cdh4) from Mus musculus (Mouse).